The following is a 66-amino-acid chain: Large ribosomal subunit protein bL31 (66 aa).

Zn(2+) contacts are provided by C16, C18, C36, and C39.

This sequence belongs to the bacterial ribosomal protein bL31 family. Type A subfamily. As to quaternary structure, part of the 50S ribosomal subunit. Requires Zn(2+) as cofactor.

Binds the 23S rRNA. The polypeptide is Large ribosomal subunit protein bL31 (Trichlorobacter lovleyi (strain ATCC BAA-1151 / DSM 17278 / SZ) (Geobacter lovleyi)).